A 367-amino-acid polypeptide reads, in one-letter code: MTTHQSIRRLSRIAALVGLAFVAGTVAAADGKAELQALPEAKAGNADMVELGKHLFFDTRLSGDMGVSCASCHDPAKGFSDGMPLSAGYPSVEYFRNAPTLINSRFKNVFMWDGRLDGADMGTLVRDMLTEAHTMNMDSRLMQERLSQVPEYVAMWQKFRKDDINGMRVYGVVGEYVKTLVSQNAPIDRFLKGDGSALTSQQKDGYEIFTGKGGCVACHNGPLGSDGQVHNTGVPENPEVLKNPNRTVTLLRHYATSGMPNYMNARTDLGHYAISKDPADMNKFATPSLRELKYTAPYMHNGMLTTLDQVVDFYNQGGGQGSELTPLGLSGSEKKALVAFLEALSGEPLNVVAPTLPDYQPRQFGKN.

The signal sequence occupies residues 1-28 (MTTHQSIRRLSRIAALVGLAFVAGTVAA). Cytochrome c domains are found at residues 47–157 (DMVE…AMWQ) and 200–345 (SQQK…EALS). Positions 69, 72, 73, 215, 218, and 219 each coordinate heme c.

The iodate reductase (Idr) complex is composed of a molybdopterin-dependent iodate reductase (IdrA and IdrB subunits) and two associated peroxidases (IdrP1 and IdrP2). Heme c is required as a cofactor.

Its subcellular location is the periplasm. The enzyme catalyses 2 Fe(II)-[cytochrome c] + H2O2 + 2 H(+) = 2 Fe(III)-[cytochrome c] + 2 H2O. Its function is as follows. Involved in iodate respiration. May play a critical role in detoxification of inadvertent H(2)O(2) generated by the iodate reductase IdrA/IdrB. In Denitromonas iodatirespirans, this protein is Cytochrome-c peroxidase IdrP2.